The chain runs to 209 residues: PRA1 family protein A3 (209 aa).

Transmembrane regions (helical) follow at residues L51 to T72, A76 to F98, L143 to L163, and L164 to R184.

The protein belongs to the PRA1 family.

It localises to the endosome membrane. In terms of biological role, may be involved in both secretory and endocytic intracellular trafficking in the endosomal/prevacuolar compartments. The sequence is that of PRA1 family protein A3 (PRA1A3) from Arabidopsis thaliana (Mouse-ear cress).